A 51-amino-acid polypeptide reads, in one-letter code: Sperm protamine P1 (51 aa).

Disulfide bonds link Cys7–Cys15 and Cys38–Cys48.

The protein belongs to the protamine P1 family. As to quaternary structure, cross-linked by interchain disulfide bonds around the DNA-helix. Post-translationally, phosphorylated by SRPK1. In terms of tissue distribution, testis.

Its subcellular location is the nucleus. The protein resides in the chromosome. Its function is as follows. Protamines substitute for histones in the chromatin of sperm during the haploid phase of spermatogenesis. They compact sperm DNA into a highly condensed, stable and inactive complex. The sequence is that of Sperm protamine P1 (Prm1) from Rattus norvegicus (Rat).